The following is a 423-amino-acid chain: MASALEQFVNSVRQLSAQGQMTQLCELINKSGELLAKNLSHLDTVLGALDVQEHSLGVLAVLFVKFSMPSVPDFETLFSQVQLFISTCNGEHIRYATDTFAGLCHQLTNALVERKQPLRGIGILKQAIDKMQMNTNQLTSIHADLCQLCLLAKCFKPALPYLDVDMMDICKENGAYDAKHFLCYYYYGGMIYTGLKNFERALYFYEQAITTPAMAVSHIMLESYKKYILVSLILLGKVQQLPKYTSQIVGRFIKPLSNAYHELAQVYSTNNPSELRNLVNKHSETFTRDNNMGLVKQCLSSLYKKNIQRLTKTFLTLSLQDMASRVQLSGPQEAEKYVLHMIEDGEIFASINQKDGMVSFHDNPEKYNNPAMLHNIDQEMLKCIELDERLKAMDQEITVNPQFVQKSMGSQEDDSGNKPSSYS.

Residue Ala-2 is modified to N-acetylalanine. The PCI domain occupies 197-365; the sequence is NFERALYFYE…GMVSFHDNPE (169 aa). The segment at 402-423 is disordered; it reads QFVQKSMGSQEDDSGNKPSSYS. A phosphoserine mark is found at Ser-407, Ser-410, and Ser-423.

Belongs to the CSN3 family. In terms of assembly, component of the CSN complex, composed of COPS1/GPS1, COPS2, COPS3, COPS4, COPS5, COPS6, COPS7 (COPS7A or COPS7B), COPS8 and COPS9 isoform 1. In the complex, it probably interacts directly with COPS1, COPS4, COPS8 and COPS9 isoform 1. Interacts with CK2 and PKD. Interacts with the translation initiation factor EIF3S6 and IKBKG. Interacts with ERCC6. Widely expressed. Expressed at high level in heart and skeletal muscle.

The protein localises to the cytoplasm. It is found in the nucleus. Its function is as follows. Component of the COP9 signalosome complex (CSN), a complex involved in various cellular and developmental processes. The CSN complex is an essential regulator of the ubiquitin (Ubl) conjugation pathway by mediating the deneddylation of the cullin subunits of SCF-type E3 ligase complexes, leading to decrease the Ubl ligase activity of SCF-type complexes such as SCF, CSA or DDB2. The complex is also involved in phosphorylation of p53/TP53, c-jun/JUN, IkappaBalpha/NFKBIA, ITPK1 and IRF8/ICSBP, possibly via its association with CK2 and PKD kinases. CSN-dependent phosphorylation of TP53 and JUN promotes and protects degradation by the Ubl system, respectively. The sequence is that of COP9 signalosome complex subunit 3 (COPS3) from Homo sapiens (Human).